The chain runs to 404 residues: Probable tRNA sulfurtransferase (404 aa).

A THUMP domain is found at 60 to 165 (QPVAESLKQI…EEAAYISYET (106 aa)). ATP is bound by residues 183-184 (ML), 208-209 (HF), Arg265, Gly287, and Gln296.

Belongs to the ThiI family.

It is found in the cytoplasm. The catalysed reaction is [ThiI sulfur-carrier protein]-S-sulfanyl-L-cysteine + a uridine in tRNA + 2 reduced [2Fe-2S]-[ferredoxin] + ATP + H(+) = [ThiI sulfur-carrier protein]-L-cysteine + a 4-thiouridine in tRNA + 2 oxidized [2Fe-2S]-[ferredoxin] + AMP + diphosphate. It carries out the reaction [ThiS sulfur-carrier protein]-C-terminal Gly-Gly-AMP + S-sulfanyl-L-cysteinyl-[cysteine desulfurase] + AH2 = [ThiS sulfur-carrier protein]-C-terminal-Gly-aminoethanethioate + L-cysteinyl-[cysteine desulfurase] + A + AMP + 2 H(+). It participates in cofactor biosynthesis; thiamine diphosphate biosynthesis. Functionally, catalyzes the ATP-dependent transfer of a sulfur to tRNA to produce 4-thiouridine in position 8 of tRNAs, which functions as a near-UV photosensor. Also catalyzes the transfer of sulfur to the sulfur carrier protein ThiS, forming ThiS-thiocarboxylate. This is a step in the synthesis of thiazole, in the thiamine biosynthesis pathway. The sulfur is donated as persulfide by IscS. This chain is Probable tRNA sulfurtransferase, found in Streptococcus sanguinis (strain SK36).